Consider the following 514-residue polypeptide: Peptide chain release factor 3 (514 aa).

Positions 8–268 constitute a tr-type G domain; the sequence is KKRRTFAIIS…IFLKFAPEPH (261 aa). GTP-binding positions include 17-24, 85-89, and 139-142; these read SHPDAGKT, DTPGH, and NKLD.

It belongs to the TRAFAC class translation factor GTPase superfamily. Classic translation factor GTPase family. PrfC subfamily.

Its subcellular location is the cytoplasm. Functionally, increases the formation of ribosomal termination complexes and stimulates activities of RF-1 and RF-2. It binds guanine nucleotides and has strong preference for UGA stop codons. It may interact directly with the ribosome. The stimulation of RF-1 and RF-2 is significantly reduced by GTP and GDP, but not by GMP. The sequence is that of Peptide chain release factor 3 from Streptococcus pneumoniae serotype 2 (strain D39 / NCTC 7466).